A 508-amino-acid polypeptide reads, in one-letter code: MKETVAMLNQQYVMPNGLTPYAGVTAKSPWLASESEKRQRKICDSLETAIRRSGLQNGMTISFHHAFRGGDKVVNMVVAKLAEMGFRDLTLASSSLIDAHWPLIEHIKNGVIRQIYTSGLRGKLGEEISAGLMENPVQIHSHGGRVQLIQSGELSIDVAFLGVPCCDEFGNANGFSGKSRCGSLGYARVDAEHAKCVVLLTEEWVDYPNYPASIAQDQVDLIVQVDEVGDPQKITAGAIRLTSNPRELLIARQAAKVVEHSGYFKEGFSLQTGTGGASLAVTRFLEDKMRRNGITASFGLGGITGTMVDLHEKGLIKTLLDTQSFDGDAARSLAQNPNHVEISTNQYASPGSKGASCERLNVVMLSALEIDIDFNVNVMTGSNGVLRGASGGHSDTAAGADLTIITAPLVRGRIPCVVEKVLTRVTPGASVDVLVTDHGIAVNPARQDLIDNLRSAGIPLMTIEELQQRAELLTGKPQPIEFTDRVVAVVRYRDGSVIDVIRQVKNSD.

As to quaternary structure, oligomer with a subunit composition of (alpha,beta,gamma)6.

Its subcellular location is the cytoplasm. It catalyses the reaction citrate = oxaloacetate + acetate. The enzyme catalyses citrate + acetyl-CoA = (3S)-citryl-CoA + acetate. In terms of biological role, represents a citrate:acetyl-ACP transferase. The protein is Citrate lyase alpha chain (citF) of Klebsiella pneumoniae.